Consider the following 43-residue polypeptide: Defensin, isoforms B and C (43 aa).

Intrachain disulfides connect C3–C34, C20–C40, and C24–C42.

This sequence belongs to the invertebrate defensin family. Type 1 subfamily.

The protein localises to the secreted. Its function is as follows. Involved in anti Gram-positive activity of immune hemolymph of Z.atratus. In Zophobas atratus (Giant mealworm beetle), this protein is Defensin, isoforms B and C.